The following is a 254-amino-acid chain: Enolase-phosphatase E1 (254 aa).

Asp13 and Glu15 together coordinate Mg(2+). Residues Ser127–Ser128 and Lys173 each bind substrate. Asp200 is a binding site for Mg(2+).

It belongs to the HAD-like hydrolase superfamily. MasA/MtnC family. Monomer. The cofactor is Mg(2+).

The protein localises to the cytoplasm. Its subcellular location is the nucleus. It catalyses the reaction 5-methylsulfanyl-2,3-dioxopentyl phosphate + H2O = 1,2-dihydroxy-5-(methylsulfanyl)pent-1-en-3-one + phosphate. Its pathway is amino-acid biosynthesis; L-methionine biosynthesis via salvage pathway; L-methionine from S-methyl-5-thio-alpha-D-ribose 1-phosphate: step 3/6. The protein operates within amino-acid biosynthesis; L-methionine biosynthesis via salvage pathway; L-methionine from S-methyl-5-thio-alpha-D-ribose 1-phosphate: step 4/6. Bifunctional enzyme that catalyzes the enolization of 2,3-diketo-5-methylthiopentyl-1-phosphate (DK-MTP-1-P) into the intermediate 2-hydroxy-3-keto-5-methylthiopentenyl-1-phosphate (HK-MTPenyl-1-P), which is then dephosphorylated to form the acireductone 1,2-dihydroxy-3-keto-5-methylthiopentene (DHK-MTPene). The sequence is that of Enolase-phosphatase E1 (utr4) from Sclerotinia sclerotiorum (strain ATCC 18683 / 1980 / Ss-1) (White mold).